A 152-amino-acid chain; its full sequence is UPF0178 protein YPTS_2857 (152 aa).

It belongs to the UPF0178 family.

The polypeptide is UPF0178 protein YPTS_2857 (Yersinia pseudotuberculosis serotype IB (strain PB1/+)).